The sequence spans 230 residues: Mitochondrial intermembrane space import and assembly protein 40 (230 aa).

A mitochondrion-targeting transit peptide spans 1 to 18 (MFARSFSNASRTIARRSL). Residues 1–22 (MFARSFSNASRTIARRSLSTRS) show a composition bias toward polar residues. A disordered region spans residues 1–30 (MFARSFSNASRTIARRSLSTRSGPAPSSLW). Topologically, residues 19 to 34 (STRSGPAPSSLWSSRN) are mitochondrial matrix. A helical; Signal-anchor for type II membrane protein membrane pass occupies residues 35–51 (AVIAGTTLAITALAVTS). Residues 52–230 (ERRKVFNESA…EETAAPAAAP (179 aa)) are Mitochondrial intermembrane-facing. The tract at residues 58–111 (NESAQKATSPRDSIIAQDSLKENVHKKSVRQDEFSGESTKPEASTSSDSVEKAA) is disordered. The span at 59-68 (ESAQKATSPR) shows a compositional bias: polar residues. Residues 76 to 90 (SLKENVHKKSVRQDE) are compositionally biased toward basic and acidic residues. Polar residues predominate over residues 93–105 (GESTKPEASTSSD). Intrachain disulfides connect cysteine 144–cysteine 146, cysteine 155–cysteine 188, and cysteine 165–cysteine 178. Residues 152 to 196 (TGPCGEQFKAAFSCFVYSEAEPKGVDCVELFKVMQDCFREHPEIY) form the CHCH domain. Short sequence motifs (cx9C motif) lie at residues 155-165 (CGEQFKAAFSC) and 178-188 (CVELFKVMQDC). Positions 195-230 (IYGEEIDDDEAPAQEGTMEEKVEAAKEETAAPAAAP) are disordered. Over residues 196 to 206 (YGEEIDDDEAP) the composition is skewed to acidic residues. A compositionally biased stretch (basic and acidic residues) spans 212 to 223 (MEEKVEAAKEET).

As to quaternary structure, monomer. Cu(2+) serves as cofactor. The cofactor is Zn(2+).

It is found in the mitochondrion inner membrane. Required for the import and folding of small cysteine-containing proteins (small Tim) in the mitochondrial intermembrane space (IMS). Forms a redox cycle with ERV1 that involves a disulfide relay system. Precursor proteins to be imported into the IMS are translocated in their reduced form into the mitochondria. The oxidized form of MIA40 forms a transient intermolecular disulfide bridge with the reduced precursor protein, resulting in oxidation of the precursor protein that now contains an intramolecular disulfide bond and is able to undergo folding in the IMS. This Cryptococcus neoformans var. neoformans serotype D (strain JEC21 / ATCC MYA-565) (Filobasidiella neoformans) protein is Mitochondrial intermembrane space import and assembly protein 40 (MIA40).